The sequence spans 98 residues: Cystatin-B (98 aa).

Residue Met1 is modified to N-acetylmethionine. Positions 46–50 (QVVAG) match the Secondary area of contact motif.

This sequence belongs to the cystatin family. Able to form dimers stabilized by noncovalent forces.

Its subcellular location is the cytoplasm. It is found in the nucleus. This is an intracellular thiol proteinase inhibitor. Tightly binding reversible inhibitor of cathepsins L, H and B. This is Cystatin-B (CSTB) from Pongo pygmaeus (Bornean orangutan).